Reading from the N-terminus, the 155-residue chain is Putative pre-16S rRNA nuclease (155 aa).

This sequence belongs to the YqgF nuclease family.

The protein resides in the cytoplasm. Could be a nuclease involved in processing of the 5'-end of pre-16S rRNA. The protein is Putative pre-16S rRNA nuclease of Xylella fastidiosa (strain M23).